Consider the following 668-residue polypeptide: Protein ENTREP3 (668 aa).

The next 3 membrane-spanning stretches (helical) occupy residues 34-54 (LLTL…FSMV), 67-87 (SCPS…IVSW), and 91-111 (FTLV…LSMA). Asn160 carries N-linked (GlcNAc...) asparagine glycosylation. The helical transmembrane segment at 174 to 194 (LFSVCGLTICAAIICTLSAIV) threads the bilayer. Ser358 and Ser389 each carry phosphoserine. 3 disordered regions span residues 386–419 (FEES…PTAA), 442–503 (RVPR…SSDT), and 550–570 (SAEK…SGPA). A compositionally biased stretch (low complexity) spans 398 to 407 (AARSYSCSAP). Phosphoserine is present on Ser493. Ser574 carries the post-translational modification Phosphoserine. 2 disordered regions span residues 597-620 (KAPD…WGRP) and 645-668 (GRRL…ETGL). The span at 655-668 (HSLSLNGGSRETGL) shows a compositional bias: polar residues.

The protein belongs to the ENTREP family. May interact with WWOX. Widely expressed.

Its subcellular location is the membrane. The chain is Protein ENTREP3 from Homo sapiens (Human).